Reading from the N-terminus, the 445-residue chain is Ribosomal protein uS12 methylthiotransferase RimO (445 aa).

Residues 4–119 (IKVALVSLGC…LLESIKVFLK (116 aa)) form the MTTase N-terminal domain. C13, C48, C82, C156, C160, and C163 together coordinate [4Fe-4S] cluster. A Radical SAM core domain is found at 142–372 (TTPTYTAYVR…MILQQSISKD (231 aa)). A TRAM domain is found at 375–441 (KEKIGKIYEV…EYDLIGVVYN (67 aa)).

This sequence belongs to the methylthiotransferase family. RimO subfamily. [4Fe-4S] cluster serves as cofactor.

It localises to the cytoplasm. It catalyses the reaction L-aspartate(89)-[ribosomal protein uS12]-hydrogen + (sulfur carrier)-SH + AH2 + 2 S-adenosyl-L-methionine = 3-methylsulfanyl-L-aspartate(89)-[ribosomal protein uS12]-hydrogen + (sulfur carrier)-H + 5'-deoxyadenosine + L-methionine + A + S-adenosyl-L-homocysteine + 2 H(+). Functionally, catalyzes the methylthiolation of an aspartic acid residue of ribosomal protein uS12. The protein is Ribosomal protein uS12 methylthiotransferase RimO of Clostridium botulinum (strain Loch Maree / Type A3).